The following is a 231-amino-acid chain: Protein virC1 (231 aa).

The protein is Protein virC1 (virC1) of Rhizobium radiobacter (Agrobacterium tumefaciens).